The primary structure comprises 180 residues: NADH-quinone oxidoreductase subunit I (180 aa).

4Fe-4S ferredoxin-type domains follow at residues 50-80 (LTRNIDGQERCVACNLCAVVCPVDCISLQKS) and 90-119 (KFFRINFSRCIFCGLCEEACPTAAIQLMPD). 8 residues coordinate [4Fe-4S] cluster: C60, C63, C66, C70, C99, C102, C105, and C109.

The protein belongs to the complex I 23 kDa subunit family. As to quaternary structure, NDH-1 is composed of 13 different subunits. Subunits NuoA, H, J, K, L, M, N constitute the membrane sector of the complex. [4Fe-4S] cluster serves as cofactor.

The protein resides in the cell membrane. It carries out the reaction a quinone + NADH + 5 H(+)(in) = a quinol + NAD(+) + 4 H(+)(out). NDH-1 shuttles electrons from NADH, via FMN and iron-sulfur (Fe-S) centers, to quinones in the respiratory chain. The immediate electron acceptor for the enzyme in this species is believed to be ubiquinone. Couples the redox reaction to proton translocation (for every two electrons transferred, four hydrogen ions are translocated across the cytoplasmic membrane), and thus conserves the redox energy in a proton gradient. In Buchnera aphidicola subsp. Acyrthosiphon pisum (strain APS) (Acyrthosiphon pisum symbiotic bacterium), this protein is NADH-quinone oxidoreductase subunit I.